The chain runs to 347 residues: LRP2-binding protein (347 aa).

A TPR repeat occupies T59 to A92. 6 Sel1-like repeats span residues T93–C125, F133–N168, V173–N206, L207–N242, V243–D277, and A297–P332.

In terms of assembly, interacts with LRP2.

It localises to the cytoplasm. Functionally, may act as an adapter that regulates LRP2 function. This chain is LRP2-binding protein (LRP2BP), found in Homo sapiens (Human).